Here is a 227-residue protein sequence, read N- to C-terminus: Zinc finger protein ZAT10 (227 aa).

The segment at 80–102 adopts a C2H2-type 1 zinc-finger fold; the sequence is YKCSVCDKTFSSYQALGGHKASH. Residues 96 to 128 are disordered; that stretch reads GGHKASHRKNLSQTLSGGGDDHSTSSATTTSAV. A compositionally biased stretch (low complexity) spans 119-128; the sequence is TSSATTTSAV. The C2H2-type 2 zinc finger occupies 136–158; that stretch reads HVCTICNKSFPSGQALGGHKRCH. Residues 168 to 189 form a disordered region; that stretch reads SSVSNSEGAGSTSHVSSSHRGF. The segment covering 174 to 186 has biased composition (polar residues); sequence EGAGSTSHVSSSH.

As to expression, expressed in roots, stems and leaves.

It localises to the nucleus. Transcriptional repressor involved in abiotic stress responses. Can repress the stress responsive genes DREB1A and LTI78. Probably involved in jasmonate (JA) early signaling response. May regulate the expression of the JA biosynthesis gene LOX3 and control the expression of TIFY10A/JAZ1, a key repressor in the JA signaling cascade. The polypeptide is Zinc finger protein ZAT10 (ZAT10) (Arabidopsis thaliana (Mouse-ear cress)).